The sequence spans 113 residues: Large ribosomal subunit protein P1 (113 aa).

A disordered region spans residues 84–113; that stretch reads APAAAAKKETKKEEVKKEESDDDMGMGLFD. Positions 89–102 are enriched in basic and acidic residues; that stretch reads AKKETKKEEVKKEE.

Belongs to the eukaryotic ribosomal protein P1/P2 family. P1 and P2 exist as dimers at the large ribosomal subunit.

In terms of biological role, plays an important role in the elongation step of protein synthesis. The protein is Large ribosomal subunit protein P1 (rplp1) of Dictyostelium discoideum (Social amoeba).